A 383-amino-acid chain; its full sequence is Chaperone protein DnaJ (383 aa).

Positions 6-70 constitute a J domain; that stretch reads DYYDVLGVGR…QKRAAYDQYG (65 aa). A CR-type zinc finger spans residues 140–222; it reads GKETKISYSR…CHGTGREEER (83 aa). Zn(2+)-binding residues include C153, C156, C170, C173, C196, C199, C210, and C213. CXXCXGXG motif repeat units lie at residues 153 to 160, 170 to 177, 196 to 203, and 210 to 217; these read CHTCHGSG, CHKCHGAG, CDVCGGTG, and CDTCHGTG.

This sequence belongs to the DnaJ family. In terms of assembly, homodimer. Requires Zn(2+) as cofactor.

Its subcellular location is the cytoplasm. Participates actively in the response to hyperosmotic and heat shock by preventing the aggregation of stress-denatured proteins and by disaggregating proteins, also in an autonomous, DnaK-independent fashion. Unfolded proteins bind initially to DnaJ; upon interaction with the DnaJ-bound protein, DnaK hydrolyzes its bound ATP, resulting in the formation of a stable complex. GrpE releases ADP from DnaK; ATP binding to DnaK triggers the release of the substrate protein, thus completing the reaction cycle. Several rounds of ATP-dependent interactions between DnaJ, DnaK and GrpE are required for fully efficient folding. Also involved, together with DnaK and GrpE, in the DNA replication of plasmids through activation of initiation proteins. This Latilactobacillus sakei (Lactobacillus sakei) protein is Chaperone protein DnaJ.